Here is a 268-residue protein sequence, read N- to C-terminus: Undecaprenyl-diphosphatase (268 aa).

A run of 8 helical transmembrane segments spans residues 9–29 (VILG…TGHL), 47–67 (FDVL…FAKL), 83–103 (FIIG…AAGS), 107–127 (LFLF…AVLL), 144–164 (FPVL…IPGV), 184–204 (AAEF…VYDL), 218–238 (IVAV…KTFL), and 246–266 (FQLF…ALAM).

Belongs to the UppP family.

The protein resides in the cell inner membrane. It carries out the reaction di-trans,octa-cis-undecaprenyl diphosphate + H2O = di-trans,octa-cis-undecaprenyl phosphate + phosphate + H(+). Its function is as follows. Catalyzes the dephosphorylation of undecaprenyl diphosphate (UPP). Confers resistance to bacitracin. This chain is Undecaprenyl-diphosphatase, found in Rhodopseudomonas palustris (strain HaA2).